We begin with the raw amino-acid sequence, 120 residues long: Small ribosomal subunit protein uS13 (120 aa).

A disordered region spans residues 94–120 (GLPLRGQRTRTNARTRKGPRKAIAGKK).

It belongs to the universal ribosomal protein uS13 family. Part of the 30S ribosomal subunit. Forms a loose heterodimer with protein S19. Forms two bridges to the 50S subunit in the 70S ribosome.

Located at the top of the head of the 30S subunit, it contacts several helices of the 16S rRNA. In the 70S ribosome it contacts the 23S rRNA (bridge B1a) and protein L5 of the 50S subunit (bridge B1b), connecting the 2 subunits; these bridges are implicated in subunit movement. Contacts the tRNAs in the A and P-sites. The protein is Small ribosomal subunit protein uS13 of Aromatoleum aromaticum (strain DSM 19018 / LMG 30748 / EbN1) (Azoarcus sp. (strain EbN1)).